The primary structure comprises 202 residues: Dephospho-CoA kinase (202 aa).

Residues 3-202 enclose the DPCK domain; that stretch reads TIGITGGIGS…TKRPNPPDRL (200 aa). Residue 11–16 coordinates ATP; the sequence is GSGKSV. Positions 138–161 are disordered; sequence RAMARDGSSAETMRQRMLSQEREQ.

This sequence belongs to the CoaE family.

The protein resides in the cytoplasm. It carries out the reaction 3'-dephospho-CoA + ATP = ADP + CoA + H(+). Its pathway is cofactor biosynthesis; coenzyme A biosynthesis; CoA from (R)-pantothenate: step 5/5. Functionally, catalyzes the phosphorylation of the 3'-hydroxyl group of dephosphocoenzyme A to form coenzyme A. This chain is Dephospho-CoA kinase, found in Porphyromonas gingivalis (strain ATCC BAA-308 / W83).